The sequence spans 360 residues: Phenylalanine--tRNA ligase alpha subunit (360 aa).

Glu260 serves as a coordination point for Mg(2+).

It belongs to the class-II aminoacyl-tRNA synthetase family. Phe-tRNA synthetase alpha subunit type 1 subfamily. As to quaternary structure, tetramer of two alpha and two beta subunits. Mg(2+) is required as a cofactor.

The protein resides in the cytoplasm. The enzyme catalyses tRNA(Phe) + L-phenylalanine + ATP = L-phenylalanyl-tRNA(Phe) + AMP + diphosphate + H(+). The protein is Phenylalanine--tRNA ligase alpha subunit of Bartonella tribocorum (strain CIP 105476 / IBS 506).